A 421-amino-acid chain; its full sequence is Pyridinium-3,5-bisthiocarboxylic acid mononucleotide nickel insertion protein (421 aa).

The protein belongs to the LarC family.

It carries out the reaction Ni(II)-pyridinium-3,5-bisthiocarboxylate mononucleotide = pyridinium-3,5-bisthiocarboxylate mononucleotide + Ni(2+). Involved in the biosynthesis of a nickel-pincer cofactor ((SCS)Ni(II) pincer complex). Binds Ni(2+), and functions in nickel delivery to pyridinium-3,5-bisthiocarboxylic acid mononucleotide (P2TMN), to form the mature cofactor. Is thus probably required for the activation of nickel-pincer cofactor-dependent enzymes. This chain is Pyridinium-3,5-bisthiocarboxylic acid mononucleotide nickel insertion protein, found in Alkaliphilus metalliredigens (strain QYMF).